The sequence spans 375 residues: Anhydro-N-acetylmuramic acid kinase (375 aa).

Residue 13-20 (GTSMDGVD) participates in ATP binding.

This sequence belongs to the anhydro-N-acetylmuramic acid kinase family.

It catalyses the reaction 1,6-anhydro-N-acetyl-beta-muramate + ATP + H2O = N-acetyl-D-muramate 6-phosphate + ADP + H(+). The protein operates within amino-sugar metabolism; 1,6-anhydro-N-acetylmuramate degradation. It participates in cell wall biogenesis; peptidoglycan recycling. Functionally, catalyzes the specific phosphorylation of 1,6-anhydro-N-acetylmuramic acid (anhMurNAc) with the simultaneous cleavage of the 1,6-anhydro ring, generating MurNAc-6-P. Is required for the utilization of anhMurNAc either imported from the medium or derived from its own cell wall murein, and thus plays a role in cell wall recycling. This chain is Anhydro-N-acetylmuramic acid kinase, found in Pelagibacter ubique (strain HTCC1062).